We begin with the raw amino-acid sequence, 239 residues long: Sugar fermentation stimulation protein homolog (239 aa).

The protein belongs to the SfsA family.

The chain is Sugar fermentation stimulation protein homolog from Microcystis aeruginosa (strain NIES-843 / IAM M-2473).